Reading from the N-terminus, the 276-residue chain is Pantothenate synthetase (276 aa).

26–33 (MGFLHEGH) provides a ligand contact to ATP. Residue His-33 is the Proton donor of the active site. Residue Gln-57 coordinates (R)-pantoate. A beta-alanine-binding site is contributed by Gln-57. An ATP-binding site is contributed by 142–145 (GLKD). Gln-148 is a binding site for (R)-pantoate. Residues Ile-171 and 179 to 182 (KSSR) each bind ATP.

It belongs to the pantothenate synthetase family. In terms of assembly, homodimer.

The protein localises to the cytoplasm. It catalyses the reaction (R)-pantoate + beta-alanine + ATP = (R)-pantothenate + AMP + diphosphate + H(+). It functions in the pathway cofactor biosynthesis; (R)-pantothenate biosynthesis; (R)-pantothenate from (R)-pantoate and beta-alanine: step 1/1. In terms of biological role, catalyzes the condensation of pantoate with beta-alanine in an ATP-dependent reaction via a pantoyl-adenylate intermediate. The sequence is that of Pantothenate synthetase from Exiguobacterium sibiricum (strain DSM 17290 / CCUG 55495 / CIP 109462 / JCM 13490 / 255-15).